The chain runs to 445 residues: Serine--tRNA ligase (445 aa).

250–252 (TAE) is a binding site for L-serine. 281 to 283 (RAE) lines the ATP pocket. Glu-304 lines the L-serine pocket. 368–371 (EISS) contributes to the ATP binding site. Position 404 (Ser-404) interacts with L-serine.

It belongs to the class-II aminoacyl-tRNA synthetase family. Type-1 seryl-tRNA synthetase subfamily. Homodimer. The tRNA molecule binds across the dimer.

It localises to the cytoplasm. The catalysed reaction is tRNA(Ser) + L-serine + ATP = L-seryl-tRNA(Ser) + AMP + diphosphate + H(+). It catalyses the reaction tRNA(Sec) + L-serine + ATP = L-seryl-tRNA(Sec) + AMP + diphosphate + H(+). Its pathway is aminoacyl-tRNA biosynthesis; selenocysteinyl-tRNA(Sec) biosynthesis; L-seryl-tRNA(Sec) from L-serine and tRNA(Sec): step 1/1. Functionally, catalyzes the attachment of serine to tRNA(Ser). Is also able to aminoacylate tRNA(Sec) with serine, to form the misacylated tRNA L-seryl-tRNA(Sec), which will be further converted into selenocysteinyl-tRNA(Sec). The chain is Serine--tRNA ligase from Azorhizobium caulinodans (strain ATCC 43989 / DSM 5975 / JCM 20966 / LMG 6465 / NBRC 14845 / NCIMB 13405 / ORS 571).